Consider the following 504-residue polypeptide: Anaerobic nitric oxide reductase transcription regulator NorR (504 aa).

A 4-aspartylphosphate modification is found at Asp57. The region spanning Met187–Val416 is the Sigma-54 factor interaction domain. Residues Gly215–Glu222 and Ala278–Glu287 each bind ATP. The segment at residues Trp479–Lys498 is a DNA-binding region (H-T-H motif).

Its pathway is nitrogen metabolism; nitric oxide reduction. In terms of biological role, required for the expression of anaerobic nitric oxide (NO) reductase, acts as a transcriptional activator for at least the norVW operon. Activation also requires sigma-54. This chain is Anaerobic nitric oxide reductase transcription regulator NorR, found in Escherichia fergusonii (strain ATCC 35469 / DSM 13698 / CCUG 18766 / IAM 14443 / JCM 21226 / LMG 7866 / NBRC 102419 / NCTC 12128 / CDC 0568-73).